The chain runs to 278 residues: Large ribosomal subunit protein uL2 (278 aa).

Disordered stretches follow at residues 33-53 and 221-278; these read LTEGKRKTGGRNNKGHVTSRG and RGVA…KKKR. Residues 269–278 are compositionally biased toward basic residues; sequence IRSRHAKKKR.

Belongs to the universal ribosomal protein uL2 family. Part of the 50S ribosomal subunit. Forms a bridge to the 30S subunit in the 70S ribosome.

Functionally, one of the primary rRNA binding proteins. Required for association of the 30S and 50S subunits to form the 70S ribosome, for tRNA binding and peptide bond formation. It has been suggested to have peptidyltransferase activity; this is somewhat controversial. Makes several contacts with the 16S rRNA in the 70S ribosome. The chain is Large ribosomal subunit protein uL2 from Novosphingobium aromaticivorans (strain ATCC 700278 / DSM 12444 / CCUG 56034 / CIP 105152 / NBRC 16084 / F199).